Consider the following 851-residue polypeptide: Glycogen phosphorylase, liver form (851 aa).

N-acetylalanine is present on alanine 2. Serine 15 bears the Phosphoserine; by PHK; in form phosphorylase a mark. Residues 43–45 (DRN), tyrosine 76, and arginine 310 each bind AMP. Lysine 364 bears the N6-succinyllysine mark. Lysine 470 carries the N6-acetyllysine modification. Phosphoserine is present on residues serine 524, serine 561, and serine 639. Position 681 is an N6-(pyridoxal phosphate)lysine (lysine 681). Residue lysine 796 is modified to N6-acetyllysine.

This sequence belongs to the glycogen phosphorylase family. As to quaternary structure, homodimer; enzymatically active. Interacts with PPP1R3B; recruits the phosphatase PP1 which dephosphorylates and inactivates PYGL/glycogen phosphorylase. The cofactor is pyridoxal 5'-phosphate. In terms of processing, acetylation, which is up-regulated by glucose and insulin and down-regulated by glucagon, inhibits the glycogen phosphorylase activity by promoting PPP1R3B-mediated recruitment of phosphatase PP1 and Ser-15 dephosphorylation. Phosphorylation at Ser-15 converts inactive phosphorylase b into active phosphorylase a. Dephosphorylation of Ser-15 by phosphatase PP1 inactivates the enzyme.

It is found in the cytoplasm. The protein localises to the cytosol. The enzyme catalyses [(1-&gt;4)-alpha-D-glucosyl](n) + phosphate = [(1-&gt;4)-alpha-D-glucosyl](n-1) + alpha-D-glucose 1-phosphate. Allosterically regulated through the non-covalent binding of metabolites, being activated by AMP and inhibited by ATP, ADP, and glucose-6-phosphate. The activity is also controlled by post-translational modifications including phosphorylation and acetylation. Allosteric enzyme that catalyzes the rate-limiting step in glycogen catabolism, the phosphorolytic cleavage of glycogen to produce glucose-1-phosphate, and plays a central role in maintaining cellular and organismal glucose homeostasis. The polypeptide is Glycogen phosphorylase, liver form (Ovis aries (Sheep)).